The sequence spans 231 residues: Protein PIMREG (231 aa).

The segment at 1–44 is disordered; it reads MASQWQGMRTSVRRRSLLKEEQLEKKEVTRSAGGHPETGPLGSL. Residues Ser-11 and Ser-16 each carry the phosphoserine modification. 2 short sequence motifs (D-box) span residues 14-17 and 53-56; these read RRSL and PLRA. Positions 17-29 are enriched in basic and acidic residues; sequence LLKEEQLEKKEVT. Ser-72 bears the Phosphoserine mark. 2 disordered regions span residues 115-138 and 152-197; these read KVRR…QKNT and HLRL…DLEP. Residue Ser-128 is modified to Phosphoserine; by Uhmk1; in vitro. Over residues 178 to 190 the composition is skewed to polar residues; the sequence is PCSSTEPLCSPSE. A phosphoserine mark is found at Ser-191 and Ser-193.

Interacts with PICALM; this interaction may target PICALM to the nucleus. During mitosis, associates with HDAC2 and MTA2 subunits of the chromatin-remodeling NuRD complex; this association is strongest at prometaphase and decreases as the cell progresses through metaphase and anaphase. In terms of processing, ubiquitinated by the anaphase-promoting complex/cyclosome (APC/C) complex in the presence of FZR1, leading to its degradation by the proteasome during mitotic exit. However, degradation is not essential for normal mitotic progression within a single cell cycle. As to expression, mainly expressed in thymus and ovary. Expressed in all T-cell subpopulations isolated from the thymus, macrophages, pro-erythrocytes, granulocytes, mast cells and progenitor cells.

It localises to the nucleus. Its subcellular location is the nucleolus. During mitosis, may play a role in the metaphase-to-anaphase transition. This Mus musculus (Mouse) protein is Protein PIMREG.